The sequence spans 67 residues: Conotoxin Cl14.2b (67 aa).

The first 20 residues, 1-20 (MNVTVMFLVLLLLTMPLTDG), serve as a signal peptide directing secretion. A propeptide spanning residues 21–48 (FNIRATNGGELFGPVQRDAGNVLDHGFQ) is cleaved from the precursor.

The protein belongs to the conotoxin L superfamily. In terms of processing, contains 2 disulfide bonds. In terms of tissue distribution, expressed by the venom duct.

The protein resides in the secreted. Functionally, increases calcium current amplitude through Cav1.2/Cav1.3 channels in rat pancreatic beta-cells, which is a prerequisite for eliciting insulin secretion. Stimulates insulin secretion in NIT-1 insulinoma cell lines. In vivo, significantly decreases mice blood glucose levels as of 45 minutes after treatment, similarly to insulin treatment. Has a potential therapeutic use in endocrinal pathologies such as early stages of type 2 diabetes where the pancreas's capability to produce insulin is still effective. The sequence is that of Conotoxin Cl14.2b from Californiconus californicus (California cone).